The sequence spans 217 residues: MELVLGPLEARVIGALIEKEICTPDQYPLSLNALVNACNQKSNREPVLELSELDIRAVVDELIRKRLVVNTAGFNARVPRYQHRFCNTEFGTLKFSEQELGIVCELLLRGPQTPGELRSRTNRLCSFDDVTQVDAALAALIEQGPYVVKLPREPGKRESRYAHLFSGEVDLQALAEASPASSYASPAADRLSVLEEEVETLKLQLQALEARLAQLEG.

This sequence belongs to the UPF0502 family.

In Aeromonas salmonicida (strain A449), this protein is UPF0502 protein ASA_1460.